A 192-amino-acid chain; its full sequence is Fe/S biogenesis protein NfuA (192 aa).

Cysteine 150 and cysteine 153 together coordinate [4Fe-4S] cluster.

Belongs to the NfuA family. In terms of assembly, homodimer. [4Fe-4S] cluster serves as cofactor.

In terms of biological role, involved in iron-sulfur cluster biogenesis. Binds a 4Fe-4S cluster, can transfer this cluster to apoproteins, and thereby intervenes in the maturation of Fe/S proteins. Could also act as a scaffold/chaperone for damaged Fe/S proteins. This chain is Fe/S biogenesis protein NfuA, found in Vesicomyosocius okutanii subsp. Calyptogena okutanii (strain HA).